The primary structure comprises 92 residues: Small ribosomal subunit protein uS19 (92 aa).

This sequence belongs to the universal ribosomal protein uS19 family.

Protein S19 forms a complex with S13 that binds strongly to the 16S ribosomal RNA. The protein is Small ribosomal subunit protein uS19 of Rhodopseudomonas palustris (strain BisA53).